Consider the following 379-residue polypeptide: Queuine tRNA-ribosyltransferase (379 aa).

The active-site Proton acceptor is the aspartate 94. Substrate is bound by residues 94–98 (DSGGF), aspartate 148, glutamine 191, and glycine 218. Residues 249 to 255 (GVGSPDA) form an RNA binding region. Aspartate 268 acts as the Nucleophile in catalysis. Residues 273 to 277 (TRIAR) form an RNA binding; important for wobble base 34 recognition region. Residues cysteine 306, cysteine 308, cysteine 311, and histidine 337 each coordinate Zn(2+).

Belongs to the queuine tRNA-ribosyltransferase family. Homodimer. Within each dimer, one monomer is responsible for RNA recognition and catalysis, while the other monomer binds to the replacement base PreQ1. Requires Zn(2+) as cofactor.

It carries out the reaction 7-aminomethyl-7-carbaguanine + guanosine(34) in tRNA = 7-aminomethyl-7-carbaguanosine(34) in tRNA + guanine. It functions in the pathway tRNA modification; tRNA-queuosine biosynthesis. Its function is as follows. Catalyzes the base-exchange of a guanine (G) residue with the queuine precursor 7-aminomethyl-7-deazaguanine (PreQ1) at position 34 (anticodon wobble position) in tRNAs with GU(N) anticodons (tRNA-Asp, -Asn, -His and -Tyr). Catalysis occurs through a double-displacement mechanism. The nucleophile active site attacks the C1' of nucleotide 34 to detach the guanine base from the RNA, forming a covalent enzyme-RNA intermediate. The proton acceptor active site deprotonates the incoming PreQ1, allowing a nucleophilic attack on the C1' of the ribose to form the product. After dissociation, two additional enzymatic reactions on the tRNA convert PreQ1 to queuine (Q), resulting in the hypermodified nucleoside queuosine (7-(((4,5-cis-dihydroxy-2-cyclopenten-1-yl)amino)methyl)-7-deazaguanosine). The chain is Queuine tRNA-ribosyltransferase from Staphylococcus aureus (strain Mu3 / ATCC 700698).